A 292-amino-acid polypeptide reads, in one-letter code: Probable ABC transporter permease protein PH1215 (292 aa).

6 helical membrane-spanning segments follow: residues 10 to 30 (IILF…FAVV), 72 to 92 (LLLI…LAIL), 106 to 126 (IYVL…AWMY), 160 to 180 (IIIA…LAGI), 215 to 235 (LSAF…IWVL), and 261 to 281 (FAYG…VVLP). In terms of domain architecture, ABC transmembrane type-1 spans 68–284 (LRNNLLLILL…ALVVVLPYLY (217 aa)).

It belongs to the binding-protein-dependent transport system permease family. MalFG subfamily.

It is found in the cell membrane. In terms of biological role, probably part of a binding-protein-dependent transport system PH1214/15/16. Probably responsible for the translocation of the substrate across the membrane. The protein is Probable ABC transporter permease protein PH1215 of Pyrococcus horikoshii (strain ATCC 700860 / DSM 12428 / JCM 9974 / NBRC 100139 / OT-3).